We begin with the raw amino-acid sequence, 800 residues long: Protein MICRORCHIDIA 4 (800 aa).

Disordered stretches follow at residues 1–76 (MEPI…ARSD) and 552–702 (AKRQ…RTLS). Polar residues predominate over residues 9-18 (NPVTTSTLST). A compositionally biased stretch (low complexity) spans 36–47 (ELSSSNEGSELG). Basic and acidic residues-rich tracts occupy residues 559-578 (SAKDTEKDTEDRESSPEFDP) and 628-641 (VSKDIGYKSSEKGG). Over residues 666 to 675 (NSDDDYDCDS) the composition is skewed to acidic residues. The stretch at 699–766 (RTLSQLEQEN…QASLIDVFAE (68 aa)) forms a coiled coil. Short sequence motifs (nuclear localization signal) lie at residues 716-723 (DKKEEVFL) and 735-742 (LRKTLEAE).

The protein belongs to the MORC ATPase protein family. In terms of assembly, homodimer and heterodimer. Component of an RNA-directed DNA methylation (RdDM) complex. Forms homomeric complexes. Mg(2+) serves as cofactor. Mn(2+) is required as a cofactor.

Its subcellular location is the nucleus. Exhibits ATPase activity. Binds DNA/RNA in a non-specific manner and exhibits endonuclease activity. Probably involved in DNA repair. Involved in RNA-directed DNA methylation (RdDM) as a component of the RdDM machinery and required for gene silencing. May also be involved in the regulation of chromatin architecture to maintain gene silencing. Together with MORC7, acts to suppress a wide set of non-methylated protein-coding genes, especially involved in pathogen response. Positive regulator of defense against the oomycete Hyaloperonospora arabidopsidis (Hpa). This is Protein MICRORCHIDIA 4 from Arabidopsis thaliana (Mouse-ear cress).